The chain runs to 595 residues: Putative lipase atg15 (595 aa).

The Cytoplasmic segment spans residues 1-20 (MKGLRGHNKKSFWGNTRLSD). The chain crosses the membrane as a helical; Signal-anchor for type II membrane protein span at residues 21-41 (LLWPVTLLPGLISAYQPVYLG). The Lumenal portion of the chain corresponds to 42-595 (SRQSSPFLPP…TTTGKHLGRF (554 aa)). N-linked (GlcNAc...) asparagine glycans are attached at residues asparagine 164, asparagine 199, asparagine 221, asparagine 279, and asparagine 303. Serine 319 serves as the catalytic Charge relay system. A glycan (N-linked (GlcNAc...) asparagine) is linked at asparagine 465.

This sequence belongs to the AB hydrolase superfamily. Lipase family. As to quaternary structure, binds to both phosphatidylinositol (PI) and phosphatidylinositol 3,5-bisphosphate (PIP2).

The protein resides in the endosome. It localises to the multivesicular body membrane. It is found in the prevacuolar compartment membrane. It catalyses the reaction a triacylglycerol + H2O = a diacylglycerol + a fatty acid + H(+). In terms of biological role, lipase which is essential for lysis of subvacuolar cytoplasm to vacuole targeted bodies and intravacuolar autophagic bodies. Involved in the lysis of intravacuolar multivesicular body (MVB) vesicles. The intravacuolar membrane disintegration by atg15 is critical to life span extension. This is Putative lipase atg15 (atg15) from Aspergillus niger (strain ATCC MYA-4892 / CBS 513.88 / FGSC A1513).